Here is a 98-residue protein sequence, read N- to C-terminus: Large ribosomal subunit protein bL21 (98 aa).

This sequence belongs to the bacterial ribosomal protein bL21 family. Part of the 50S ribosomal subunit. Contacts protein L20.

This protein binds to 23S rRNA in the presence of protein L20. In Novosphingobium aromaticivorans (strain ATCC 700278 / DSM 12444 / CCUG 56034 / CIP 105152 / NBRC 16084 / F199), this protein is Large ribosomal subunit protein bL21.